A 234-amino-acid polypeptide reads, in one-letter code: MSIEVVEVRPHELHYGVYVVRFEDGTERLATRNLTPGRRVYGERLIKWEGVEYREWNPYRSKLAAAILNGLKLVPIREGTHMLYLGAASGTTPSHISDIVGERGLIYSVEFSPRVFREFMEKLVDQGRRNVIPILGDARFPYQYAHYIKGVDVVYIDVAQPAQAKILADNADYFLKPGGYVMLVIKAMSIDVTAPATETFKQEINTLKERGFDVLETVHLEPYDTAHAMVIARK.

Residues 91 to 92 (TT), 110 to 111 (EF), 137 to 138 (DA), and 157 to 160 (DVAQ) each bind S-adenosyl-L-methionine.

The protein belongs to the methyltransferase superfamily. Fibrillarin family. As to quaternary structure, interacts with nop5. Component of box C/D small ribonucleoprotein (sRNP) particles that contain rpl7ae, FlpA and nop5, plus a guide RNA.

In terms of biological role, involved in pre-rRNA and tRNA processing. Utilizes the methyl donor S-adenosyl-L-methionine to catalyze the site-specific 2'-hydroxyl methylation of ribose moieties in rRNA and tRNA. Site specificity is provided by a guide RNA that base pairs with the substrate. Methylation occurs at a characteristic distance from the sequence involved in base pairing with the guide RNA. The sequence is that of Fibrillarin-like rRNA/tRNA 2'-O-methyltransferase from Pyrobaculum calidifontis (strain DSM 21063 / JCM 11548 / VA1).